A 508-amino-acid polypeptide reads, in one-letter code: Cell division protein FtsZ (508 aa).

GTP-binding positions include 24–28 (GAGGN), 111–113 (GTG), Glu-142, Arg-146, and Asp-190. 2 disordered regions span residues 342 to 389 (IAET…SAPQ) and 428 to 508 (VAEE…RLAN). The span at 464-482 (QQASAPQAQARSAQSARPQ) shows a compositional bias: low complexity.

Belongs to the FtsZ family. As to quaternary structure, homodimer. Polymerizes to form a dynamic ring structure in a strictly GTP-dependent manner. Interacts directly with several other division proteins.

Its subcellular location is the cytoplasm. In terms of biological role, essential cell division protein that forms a contractile ring structure (Z ring) at the future cell division site. The regulation of the ring assembly controls the timing and the location of cell division. One of the functions of the FtsZ ring is to recruit other cell division proteins to the septum to produce a new cell wall between the dividing cells. Binds GTP and shows GTPase activity. The protein is Cell division protein FtsZ of Caulobacter vibrioides (strain ATCC 19089 / CIP 103742 / CB 15) (Caulobacter crescentus).